A 302-amino-acid chain; its full sequence is D-alanine--D-alanine ligase (302 aa).

An ATP-grasp domain is found at 99–298 (KRLFVAEGIP…FEQLIQRIID (200 aa)). 128–183 (LAALGSPVVVKPADGGSTVGVTIAREAGHLPEAVRLALQYSPQVLIEQYIPGQEIT) serves as a coordination point for ATP. Mg(2+) contacts are provided by Asp-252, Glu-265, and Asn-267.

This sequence belongs to the D-alanine--D-alanine ligase family. Mg(2+) serves as cofactor. Requires Mn(2+) as cofactor.

The protein resides in the cytoplasm. The catalysed reaction is 2 D-alanine + ATP = D-alanyl-D-alanine + ADP + phosphate + H(+). It participates in cell wall biogenesis; peptidoglycan biosynthesis. Its function is as follows. Cell wall formation. This is D-alanine--D-alanine ligase from Gloeobacter violaceus (strain ATCC 29082 / PCC 7421).